Consider the following 1387-residue polypeptide: MAERANLVFHNKVIDGTAIKRLISRLIDRFGMAYTSHILDQVKTLGFQQATATSISLGIDDLLTIPSKGWLVQDAEQQSLILEKHHHYGNVHAVEKLRQSIEIWYATSEYLRQEMNPNFRVTDPFNPVHIMSFSGARGNASQVHQLVGMRGLMSDPQGQMIDLPIQSNLREGLSLTEYIISCYGARKGVVDTAVRTSDAGYLTRRLVEVVQHIVVRRTDCGTIRGISVSPKNRTMPERIFIQTLIGRVLADDIYMGPRCIAIRNQDIGIGLVNRFITFRTQSISIRTPFTCRSTSWICRLCYGRSPTHGDLVELGEAVGIIAGQSIGEPGTQLTLRTFHTGGVFTGGTAEHVRSPSNGKIKFNEDLVHPTRTRHGHPAFLCYIDLSVVIESEDIIHNVTIPPKSFLLVQNDQYVESEQVIAEIRAGTYTLNYKERVRKHIYSNSEGEMHWSTDVYHAPEFTYSNVHLLPKTSHLWILSGGSSRSSLVPFSLHKDQDQMNIHSLSVEQESISSLAVNNDQGRHKFFSSNFSDKKKCGIPDYSEFHRILDTGHCNLIYFASLHENSDLLAKRRRNRFIIPFQSIQEQEKELMPRSGISIEIPINGIFRRNSILAFFDDPRYRRKSSGILKYGTIGAHSIVKKEDVIEYRGVKKFKTKYQMKVDRFFFIPEEVHILPESSSIMVRNNSIIGVDTRITLNIRSQVGGLVRVERKKKSIELQIFSGDIHFPGKTDKISRHSGILIPPGRGKTNSKESKKLKNWIYVQRITPTKKKYFVLVRPVATYEIADGINLATLFPQDLFREKDNMQLRVVNYILYGNGKPVRGIFDTSIQLVRTCLVLNWDQDNKSSSVEEVRTFFVEVSTNSLIRDFLRIDLVKSQSHISYIRKRNDPSGSGLISDNGSDRINPFYYKERIQQSLSKNHGTIRTLLNRNKECQSLIILSSSNCFQMGPFNHVKYHNVIKQSIKKDPLIPIRNSLGPVGTAIQIANFYSIYHLITHNQISVTKYFQLDNLNQIFEVIKYYLMDETGRVYNPDPCSNIILNPFNLNWYFLYQNYHHNYCEETSTIISLGQFICENVCLAKNGPHLKSGQVLIVQVDSVVIRSAKPYLATPGATVHGHYGEILYEGDTLVTFIYEKSRSGDITQGLPKVEQVLEVRSIDSISLNLEKRVEGWNKRITRILGIPWGFLIGAELTIVQSRISLVNKIQKVYRSQGVQIHNRHIEIIVRQITSKVLVSEEGMSNVFLPGELIGLLRAERTGRALEEAICYRAILLGITRASLNTQSFISEASFQETARVLAKAALRGRIDWLKGLKENVVLGGMIPAGTGFKGLVHCSRQHTSILLETKKKNLYLFEGEMRDIFFHHRELFDSCISKNLHNTSERSFIGLNDS.

4 residues coordinate Zn(2+): Cys-220, Cys-291, Cys-298, and Cys-301.

It belongs to the RNA polymerase beta' chain family. RpoC2 subfamily. In terms of assembly, in plastids the minimal PEP RNA polymerase catalytic core is composed of four subunits: alpha, beta, beta', and beta''. When a (nuclear-encoded) sigma factor is associated with the core the holoenzyme is formed, which can initiate transcription. It depends on Zn(2+) as a cofactor.

The protein localises to the plastid. Its subcellular location is the chloroplast. It carries out the reaction RNA(n) + a ribonucleoside 5'-triphosphate = RNA(n+1) + diphosphate. Functionally, DNA-dependent RNA polymerase catalyzes the transcription of DNA into RNA using the four ribonucleoside triphosphates as substrates. In Carica papaya (Papaya), this protein is DNA-directed RNA polymerase subunit beta''.